Here is a 64-residue protein sequence, read N- to C-terminus: Conotoxin VnMLCL-05 (64 aa).

Residues 1–19 form the signal peptide; sequence MLCLPVFIILLLLASPAAP. Positions 20 to 43 are excised as a propeptide; that stretch reads NPLQTRIQSNLIRAGPEDANIKTD. Lys-63 is subject to Lysine amide.

The protein belongs to the conotoxin T superfamily. In terms of tissue distribution, expressed by the venom duct.

The protein resides in the secreted. This Conus ventricosus (Mediterranean cone) protein is Conotoxin VnMLCL-05.